The chain runs to 366 residues: Carbamoyl phosphate synthase small chain (366 aa).

The CPSase stretch occupies residues 1 to 170 (MLKKRYLVLE…TKSPYVSTGY (170 aa)). Residues serine 47, glycine 221, and glycine 223 each coordinate L-glutamine. The Glutamine amidotransferase type-1 domain occupies 173-360 (SVVLVDFGKK…IDMINEYKTK (188 aa)). Residue cysteine 248 is the Nucleophile of the active site. Leucine 249, glutamine 252, asparagine 290, glycine 292, and tyrosine 293 together coordinate L-glutamine. Residues histidine 333 and glutamate 335 contribute to the active site.

The protein belongs to the CarA family. As to quaternary structure, composed of two chains; the small (or glutamine) chain promotes the hydrolysis of glutamine to ammonia, which is used by the large (or ammonia) chain to synthesize carbamoyl phosphate. Tetramer of heterodimers (alpha,beta)4.

The enzyme catalyses hydrogencarbonate + L-glutamine + 2 ATP + H2O = carbamoyl phosphate + L-glutamate + 2 ADP + phosphate + 2 H(+). It catalyses the reaction L-glutamine + H2O = L-glutamate + NH4(+). It participates in amino-acid biosynthesis; L-arginine biosynthesis; carbamoyl phosphate from bicarbonate: step 1/1. Its pathway is pyrimidine metabolism; UMP biosynthesis via de novo pathway; (S)-dihydroorotate from bicarbonate: step 1/3. Small subunit of the glutamine-dependent carbamoyl phosphate synthetase (CPSase). CPSase catalyzes the formation of carbamoyl phosphate from the ammonia moiety of glutamine, carbonate, and phosphate donated by ATP, constituting the first step of 2 biosynthetic pathways, one leading to arginine and/or urea and the other to pyrimidine nucleotides. The small subunit (glutamine amidotransferase) binds and cleaves glutamine to supply the large subunit with the substrate ammonia. In Staphylococcus saprophyticus subsp. saprophyticus (strain ATCC 15305 / DSM 20229 / NCIMB 8711 / NCTC 7292 / S-41), this protein is Carbamoyl phosphate synthase small chain.